The following is a 346-amino-acid chain: Uroporphyrinogen decarboxylase (346 aa).

Residues 26-30 (RQAGR), D76, Y153, S208, and H323 contribute to the substrate site.

It belongs to the uroporphyrinogen decarboxylase family. As to quaternary structure, homodimer.

The protein resides in the cytoplasm. It carries out the reaction uroporphyrinogen III + 4 H(+) = coproporphyrinogen III + 4 CO2. Its pathway is porphyrin-containing compound metabolism; protoporphyrin-IX biosynthesis; coproporphyrinogen-III from 5-aminolevulinate: step 4/4. In terms of biological role, catalyzes the decarboxylation of four acetate groups of uroporphyrinogen-III to yield coproporphyrinogen-III. In Prochlorococcus marinus (strain MIT 9312), this protein is Uroporphyrinogen decarboxylase.